We begin with the raw amino-acid sequence, 182 residues long: Flightin (182 aa).

Over residues methionine 1–glutamate 15 the composition is skewed to acidic residues. The segment at methionine 1–arginine 76 is disordered.

Several forms of flightin are thought to be produced through post-translational modifications, possibly by phosphorylation. In terms of tissue distribution, found only in indirect flight muscles (IFM).

Functionally, possibly involved in the regulation of flight muscles contraction, possibly by modulating actin-myosin interaction. The sequence is that of Flightin (fln) from Drosophila melanogaster (Fruit fly).